We begin with the raw amino-acid sequence, 186 residues long: Large ribosomal subunit protein uL5 (186 aa).

This sequence belongs to the universal ribosomal protein uL5 family. Part of the 50S ribosomal subunit; part of the 5S rRNA/L5/L18/L25 subcomplex. Contacts the 5S rRNA and the P site tRNA. Forms a bridge to the 30S subunit in the 70S ribosome.

In terms of biological role, this is one of the proteins that bind and probably mediate the attachment of the 5S RNA into the large ribosomal subunit, where it forms part of the central protuberance. In the 70S ribosome it contacts protein S13 of the 30S subunit (bridge B1b), connecting the 2 subunits; this bridge is implicated in subunit movement. Contacts the P site tRNA; the 5S rRNA and some of its associated proteins might help stabilize positioning of ribosome-bound tRNAs. The chain is Large ribosomal subunit protein uL5 from Maricaulis maris (strain MCS10) (Caulobacter maris).